Here is a 325-residue protein sequence, read N- to C-terminus: Polyamine aminopropyltransferase (325 aa).

In terms of domain architecture, PABS spans Ser11 to Asp248. Residue Gln44 coordinates S-methyl-5'-thioadenosine. 2 residues coordinate spermidine: His75 and Asp99. S-methyl-5'-thioadenosine-binding positions include Glu119 and Asp151–Gly152. Catalysis depends on Asp169, which acts as the Proton acceptor. Position 176 (Pro176) interacts with S-methyl-5'-thioadenosine.

It belongs to the spermidine/spermine synthase family. As to quaternary structure, homodimer or homotetramer.

It is found in the cytoplasm. The enzyme catalyses S-adenosyl 3-(methylsulfanyl)propylamine + putrescine = S-methyl-5'-thioadenosine + spermidine + H(+). Its pathway is amine and polyamine biosynthesis; spermidine biosynthesis; spermidine from putrescine: step 1/1. Catalyzes the irreversible transfer of a propylamine group from the amino donor S-adenosylmethioninamine (decarboxy-AdoMet) to putrescine (1,4-diaminobutane) to yield spermidine. The polypeptide is Polyamine aminopropyltransferase (Nitrosomonas europaea (strain ATCC 19718 / CIP 103999 / KCTC 2705 / NBRC 14298)).